A 282-amino-acid chain; its full sequence is Elongation factor Ts (282 aa).

The interval T80–V83 is involved in Mg(2+) ion dislocation from EF-Tu.

Belongs to the EF-Ts family.

The protein localises to the cytoplasm. Associates with the EF-Tu.GDP complex and induces the exchange of GDP to GTP. It remains bound to the aminoacyl-tRNA.EF-Tu.GTP complex up to the GTP hydrolysis stage on the ribosome. The sequence is that of Elongation factor Ts from Chlamydia trachomatis serovar L2 (strain ATCC VR-902B / DSM 19102 / 434/Bu).